The following is a 947-amino-acid chain: Nonribosomal peptide synthetase ucdA (947 aa).

Residues 25 to 413 (YSPHANAGYC…AGPVVFKEYF (389 aa)) form an adenylation (A) domain region. The Carrier domain occupies 585–665 (APENEFERDL…DLGTALRKLQ (81 aa)). S623 is modified (O-(pantetheine 4'-phosphoryl)serine). Positions 684–934 (PLWLVHPGVG…MLSPEHVFDF (251 aa)) are thioesterase (TE) domain.

It belongs to the NRP synthetase family.

It carries out the reaction 2 3-(4-hydroxyphenyl)pyruvate + 2 ATP = atromentin + 2 AMP + 2 diphosphate + H(+). Its pathway is secondary metabolite biosynthesis. Functionally, nonribosomal peptide synthetase that mediates the biosynthesis of usterphenyllins and uscandidusins, p-terphenyl derivatives. Within the pathway, ucdA condenses two 4-hydroxyphenylpyruvate (HPPA) units to produce atromentin. UcdA first activates HPPA through its A domain to AMP-HPPA. The HPPA unit is then loaded to the T domain and eventually transferred to the TE domain. Another HPPA unit is then loaded onto the T domain. The TE domain then catalyzes the condensation of the two HPPA units and the release of atromentin via cyclization. The pathway begin with the biosynthesis of 4-hydroxyphenylpyruvate (HPPA) from L-tyrosine, possibly by the aminotransferase ucdG. The nonribosomal peptide synthetase ucdA then condenses two HPPA units to produce atromentin. The key step in this pathway is the reduction and dehydration of atromentin to form a terphenyl triol intermediate, performed by the NAD-dependent dehydrogenase ucdB. Further O-methylation by the methyltransferase ucdC forms terphenyllin carrying two methoxy moieties at C-9 and C-12, and subsequent dihydroxylation at C-3 of ring A and C-15 of ring C by the flavin-dependent oxygenase ucdD leads to 3,15-dihydroxyterphenyllin. Prenylation by ucdE at position C-5 of ring A forms usterphenyllin B, and is followed by a second prenylation at position C-14 of ring C to form usterphenyllin A. The following furan ring formation that leads to uscandidusins A and B was proven to be an unexpected spontaneous non-enzymatic reaction. The polypeptide is Nonribosomal peptide synthetase ucdA (Aspergillus ustus).